The following is a 254-amino-acid chain: Nickel import ATP-binding protein NikD (254 aa).

Residues 2–241 (PQQIELRNIA…PKHAVTRSLV (240 aa)) enclose the ABC transporter domain. 36–43 (GGSGSGKS) lines the ATP pocket.

This sequence belongs to the ABC transporter superfamily. Nickel importer (TC 3.A.1.5.3) family. In terms of assembly, the complex is composed of two ATP-binding proteins (NikD and NikE), two transmembrane proteins (NikB and NikC) and a solute-binding protein (NikA).

It localises to the cell inner membrane. The catalysed reaction is Ni(2+)(out) + ATP + H2O = Ni(2+)(in) + ADP + phosphate + H(+). Part of the ABC transporter complex NikABCDE involved in nickel import. Responsible for energy coupling to the transport system. The polypeptide is Nickel import ATP-binding protein NikD (Escherichia coli O157:H7).